The primary structure comprises 345 residues: MSNYWLNIYKPRGISSAQLVSIVKKILGKTKIGHAGTLDVEAEGILPFAVGEATKLIRLLIDARKTYIFTVKFGMQTNSGDCAGKVIATKDCVPSQEEAYAVCSKFIGSVTQIPPAFSALKVNGVRAYKLAREEKKVELKPRNITIYDLKCLNFDEKNATATYYTECSKGTYIRTLAEDLALSLQSLGFVIELRRTQVGIFKEENAIRIKSPDEITKNALEAKSIKIEAILDDILVLDATDSQAQQIKYGQKCLFNYEKDFRHLAKFAYREEFKGNTERSTTAYTLVREDASTGLTYKLPLEVEFGKMSIDLLWVRYKGTLLAIGSLNKSCFNSLRVFNLTQDFF.

Aspartate 39 serves as the catalytic Nucleophile.

It belongs to the pseudouridine synthase TruB family. Type 1 subfamily.

It carries out the reaction uridine(55) in tRNA = pseudouridine(55) in tRNA. Its function is as follows. Responsible for synthesis of pseudouridine from uracil-55 in the psi GC loop of transfer RNAs. This is tRNA pseudouridine synthase B from Rickettsia rickettsii (strain Iowa).